A 411-amino-acid polypeptide reads, in one-letter code: uncharacterized protein (411 aa).

The segment at 32 to 108 (LGGDPAPKPT…PEHPRRIPIP (77 aa)) is disordered.

This is an uncharacterized protein from Ictalurid herpesvirus 1 (strain Auburn) (IcHV-1).